Here is a 661-residue protein sequence, read N- to C-terminus: NUAK family SNF1-like kinase 1 (661 aa).

At M1 the chain carries N-acetylmethionine. The tract at residues 1–24 (MEGAAAPVAGDRPDLGLGAPGSPR) is disordered. S22 carries the phosphoserine modification. The Protein kinase domain occupies 55–306 (YELQETLGKG…IEDIANHWWV (252 aa)). ATP-binding positions include 61–69 (LGKGTYGKV) and K84. D178 acts as the Proton acceptor in catalysis. T211 is subject to Phosphothreonine; by LKB1. Disordered regions lie at residues 345-421 (TEAK…EGVV) and 442-570 (LPSS…RPSS). Residues 393-404 (SSKRPKGILKKR) show a composition bias toward basic residues. Positions 399–402 (GILK) match the GILK motif motif. Phosphoserine is present on S455. Residues 518-529 (SCRRKGILKHSS) are compositionally biased toward basic residues. At S600 the chain carries Phosphoserine; by PKB/AKT1.

It belongs to the protein kinase superfamily. CAMK Ser/Thr protein kinase family. SNF1 subfamily. Interacts (via GILK motif) with PPP1CB; the interaction is direct and bridges NUAK1 and PPP1R12A. Interacts with CDKN1A. Requires Mg(2+) as cofactor. Ubiquitinated with 'Lys-29'- and 'Lys-33'-linked polyubiquitins which appear to impede LKB1-mediated phosphorylation. Deubiquitinated by USP9X. Post-translationally, phosphorylated at Thr-211 by STK11/LKB1 in complex with STE20-related adapter-alpha (STRADA) pseudo kinase and CAB39. Not dephosphorylated by the myosin PP1 complex when regulating its activity, due to the presence of PPP1R12A, which prevents myosin PP1 from dephosphorylating NUAK1. Phosphorylated by STK38L upon stimulation with IGF1. In terms of tissue distribution, expressed at high levels in heart and brain, and at lower levels in skeletal muscle, kidney, ovary, placenta, lung and liver. Highly up-regulated in colorectal cancer cell lines.

It is found in the nucleus. The protein resides in the cytoplasm. It carries out the reaction L-seryl-[protein] + ATP = O-phospho-L-seryl-[protein] + ADP + H(+). The enzyme catalyses L-threonyl-[protein] + ATP = O-phospho-L-threonyl-[protein] + ADP + H(+). With respect to regulation, activated by phosphorylation on Thr-211. Activated by phosphorylation at Ser-600 AKT1 during glucose starvation; the relevance of such activation in normal cells is however unsure. Serine/threonine-protein kinase involved in various processes such as cell adhesion, regulation of cell ploidy and senescence, cell proliferation and tumor progression. Phosphorylates ATM, CASP6, LATS1, PPP1R12A and p53/TP53. Acts as a regulator of cellular senescence and cellular ploidy by mediating phosphorylation of 'Ser-464' of LATS1, thereby controlling its stability. Controls cell adhesion by regulating activity of the myosin protein phosphatase 1 (PP1) complex. Acts by mediating phosphorylation of PPP1R12A subunit of myosin PP1: phosphorylated PPP1R12A then interacts with 14-3-3, leading to reduced dephosphorylation of myosin MLC2 by myosin PP1. May be involved in DNA damage response: phosphorylates p53/TP53 at 'Ser-15' and 'Ser-392' and is recruited to the CDKN1A/WAF1 promoter to participate in transcription activation by p53/TP53. May also act as a tumor malignancy-associated factor by promoting tumor invasion and metastasis under regulation and phosphorylation by AKT1. Suppresses Fas-induced apoptosis by mediating phosphorylation of CASP6, thereby suppressing the activation of the caspase and the subsequent cleavage of CFLAR. Regulates UV radiation-induced DNA damage response mediated by CDKN1A. In association with STK11, phosphorylates CDKN1A in response to UV radiation and contributes to its degradation which is necessary for optimal DNA repair. The sequence is that of NUAK family SNF1-like kinase 1 (NUAK1) from Homo sapiens (Human).